A 269-amino-acid chain; its full sequence is Type II methyltransferase M2.LlaDCHI (269 aa).

It belongs to the N(4)/N(6)-methyltransferase family.

The catalysed reaction is a 2'-deoxyadenosine in DNA + S-adenosyl-L-methionine = an N(6)-methyl-2'-deoxyadenosine in DNA + S-adenosyl-L-homocysteine + H(+). A beta subtype methylase, recognizes the double-stranded sequence 5'-GATC-3', methylates A-2 on both strands, and protects the DNA from cleavage by the LlaDCHI endonuclease. This Lactococcus lactis subsp. cremoris (Streptococcus cremoris) protein is Type II methyltransferase M2.LlaDCHI.